We begin with the raw amino-acid sequence, 233 residues long: Rab-like protein 3 (233 aa).

A small GTPase-like region spans residues Met-1–Asp-233. GTP is bound by residues Gly-16–Ser-21, Lys-148–Asp-150, and Asp-179–Cys-180.

Belongs to the small GTPase superfamily. Rab family. Homodimer.

Functionally, required for KRAS signaling regulation and modulation of cell proliferation. Regulator of KRAS prenylation, and probably prenylation of other small GTPases. Required for lymphocyte development and function. Not required for myeloid cell development. This Danio rerio (Zebrafish) protein is Rab-like protein 3 (rabl3).